A 108-amino-acid chain; its full sequence is DIQMTQSTSSLSASLGDRVTISCRASQDISNYLNWYQQKPDGTVKLLIYYTSRLHSGVPSRFSGSGSGTDYSLTISNLEQEDIATYFCQQGYMLPRTFGGGTKLEIKR.

Residues 1-23 form a framework-1 region; sequence DIQMTQSTSSLSASLGDRVTISC. An intrachain disulfide couples C23 to C88. Residues 24-34 are complementarity-determining-1; the sequence is RASQDISNYLN. Positions 35 to 49 are framework-2; sequence WYQQKPDGTVKLLIY. The complementarity-determining-2 stretch occupies residues 50-56; sequence YTSRLHS. Residues 57-88 form a framework-3 region; it reads GVPSRFSGSGSGTDYSLTISNLEQEDIATYFC. The tract at residues 89-97 is complementarity-determining-3; that stretch reads QQGYMLPRT. Residues 98–108 are framework-4; the sequence is FGGGTKLEIKR.

The chain is Ig kappa chain V-V region HP 123E6 from Mus musculus (Mouse).